We begin with the raw amino-acid sequence, 239 residues long: Purine nucleoside phosphorylase DeoD-type (239 aa).

His-5 is a binding site for a purine D-ribonucleoside. Residues Gly-21, Arg-25, Arg-44, and 89-92 each bind phosphate; that span reads RVGS. A purine D-ribonucleoside is bound by residues 180–182 and 204–205; these read EME and SD. Catalysis depends on Asp-205, which acts as the Proton donor.

The protein belongs to the PNP/UDP phosphorylase family. As to quaternary structure, homohexamer; trimer of homodimers.

The enzyme catalyses a purine D-ribonucleoside + phosphate = a purine nucleobase + alpha-D-ribose 1-phosphate. The catalysed reaction is a purine 2'-deoxy-D-ribonucleoside + phosphate = a purine nucleobase + 2-deoxy-alpha-D-ribose 1-phosphate. In terms of biological role, catalyzes the reversible phosphorolytic breakdown of the N-glycosidic bond in the beta-(deoxy)ribonucleoside molecules, with the formation of the corresponding free purine bases and pentose-1-phosphate. In Klebsiella pneumoniae, this protein is Purine nucleoside phosphorylase DeoD-type.